Consider the following 393-residue polypeptide: Synaptic vesicle membrane protein VAT-1 homolog (393 aa).

A disordered region spans residues methionine 1–alanine 40. Serine 2 is modified (N-acetylserine). Phosphoserine is present on residues serine 2, serine 18, serine 27, serine 35, and serine 44.

This sequence belongs to the zinc-containing alcohol dehydrogenase family. Quinone oxidoreductase subfamily. Expressed in brain. Also expressed in glioblastoma cells.

Its subcellular location is the cytoplasm. It localises to the mitochondrion outer membrane. Functionally, possesses ATPase activity. Plays a part in calcium-regulated keratinocyte activation in epidermal repair mechanisms. Has no effect on cell proliferation. Negatively regulates mitochondrial fusion in cooperation with mitofusin proteins (MFN1-2). The chain is Synaptic vesicle membrane protein VAT-1 homolog (VAT1) from Homo sapiens (Human).